The primary structure comprises 968 residues: RNA polymerase-associated protein RapA (968 aa).

The Helicase ATP-binding domain maps to 164–334; it reads DVGRRHAPRV…FARLRLLDPD (171 aa). Position 177–184 (177–184) interacts with ATP; sequence DEVGLGKT. Positions 280 to 283 match the DEAH box motif; it reads DEAH. In terms of domain architecture, Helicase C-terminal spans 490-643; sequence RVEWLMGYLT…HTCPTGRAVY (154 aa).

Belongs to the SNF2/RAD54 helicase family. RapA subfamily. Interacts with the RNAP. Has a higher affinity for the core RNAP than for the holoenzyme. Its ATPase activity is stimulated by binding to RNAP.

Transcription regulator that activates transcription by stimulating RNA polymerase (RNAP) recycling in case of stress conditions such as supercoiled DNA or high salt concentrations. Probably acts by releasing the RNAP, when it is trapped or immobilized on tightly supercoiled DNA. Does not activate transcription on linear DNA. Probably not involved in DNA repair. The chain is RNA polymerase-associated protein RapA from Erwinia tasmaniensis (strain DSM 17950 / CFBP 7177 / CIP 109463 / NCPPB 4357 / Et1/99).